Reading from the N-terminus, the 182-residue chain is NADH-quinone oxidoreductase subunit I (182 aa).

4Fe-4S ferredoxin-type domains are found at residues 50 to 82 and 92 to 121; these read IILS…LQKA and EFFR…MTPD. Positions 62, 65, 68, 72, 101, 104, 107, and 111 each coordinate [4Fe-4S] cluster.

It belongs to the complex I 23 kDa subunit family. In terms of assembly, NDH-1 is composed of 14 different subunits. Subunits NuoA, H, J, K, L, M, N constitute the membrane sector of the complex. Requires [4Fe-4S] cluster as cofactor.

The protein localises to the cell inner membrane. It catalyses the reaction a quinone + NADH + 5 H(+)(in) = a quinol + NAD(+) + 4 H(+)(out). Its function is as follows. NDH-1 shuttles electrons from NADH, via FMN and iron-sulfur (Fe-S) centers, to quinones in the respiratory chain. The immediate electron acceptor for the enzyme in this species is believed to be ubiquinone. Couples the redox reaction to proton translocation (for every two electrons transferred, four hydrogen ions are translocated across the cytoplasmic membrane), and thus conserves the redox energy in a proton gradient. The chain is NADH-quinone oxidoreductase subunit I from Psychrobacter arcticus (strain DSM 17307 / VKM B-2377 / 273-4).